The sequence spans 202 residues: Small ribosomal subunit protein uS5 (202 aa).

The region spanning 50-113 (LKQELLNVNI…REAKLNLIPV (64 aa)) is the S5 DRBM domain.

The protein belongs to the universal ribosomal protein uS5 family. As to quaternary structure, part of the 30S ribosomal subunit. Contacts protein S4.

Its function is as follows. With S4 and S12 plays an important role in translational accuracy. This is Small ribosomal subunit protein uS5 from Pyrobaculum arsenaticum (strain DSM 13514 / JCM 11321 / PZ6).